The primary structure comprises 157 residues: Small ribosomal subunit protein uS7 (157 aa).

It belongs to the universal ribosomal protein uS7 family. In terms of assembly, part of the 30S ribosomal subunit. Contacts proteins S9 and S11.

In terms of biological role, one of the primary rRNA binding proteins, it binds directly to 16S rRNA where it nucleates assembly of the head domain of the 30S subunit. Is located at the subunit interface close to the decoding center, probably blocks exit of the E-site tRNA. The protein is Small ribosomal subunit protein uS7 of Polaromonas sp. (strain JS666 / ATCC BAA-500).